The following is a 309-amino-acid chain: Cysteinyl leukotriene receptor 2 (309 aa).

Over 1 to 26 the chain is Extracellular; that stretch reads MEVTGTPSSYSNRNCTIENFKKEFYP. N14 is a glycosylation site (N-linked (GlcNAc...) asparagine). Residues 27–47 traverse the membrane as a helical segment; sequence IIYLIIFFWGALGNGFSIYVF. Residues 48-56 are Cytoplasmic-facing; it reads LQTCKKSTS. Residues 57 to 77 traverse the membrane as a helical segment; that stretch reads VNVFMLNLATSDFLFISTLPF. At 78-98 the chain is on the extracellular side; that stretch reads RADYYFRGSNWIFGDLACRVM. C95 and C171 form a disulfide bridge. A helical transmembrane segment spans residues 99–119; it reads SYSLYVNMYTSIYFLTVLSVV. Residues 120–138 lie on the Cytoplasmic side of the membrane; the sequence is RFLATVHPFRMFHVTSVRS. Residues 139-159 traverse the membrane as a helical segment; that stretch reads AWILCGIIWVFIMASSALLLV. Over 160–187 the chain is Extracellular; it reads NGQEEKDNIISCLELSPQKFKSLLIMNH. The chain crosses the membrane as a helical span at residues 188 to 208; that stretch reads IAVAVGFLLPFLTLTVCYLLI. Residues 209-229 lie on the Cytoplasmic side of the membrane; it reads IRILLKAEIPESGPRAAHRKA. A helical transmembrane segment spans residues 230-250; that stretch reads LTTIVIAMITFLLCFLPYHAL. At 251 to 271 the chain is on the extracellular side; it reads RTLHLVTWDKDSCGDVLHKAT. The helical transmembrane segment at 272 to 292 threads the bilayer; sequence VITLTMAAANSCFNPFLYYFA. Topologically, residues 293–309 are cytoplasmic; it reads GENFKARLRAIFSKVHL.

Belongs to the G-protein coupled receptor 1 family. Widely expressed at low levels, with highest expression in the spleen, thymus and adrenal gland, and lower in the kidney, brain and peripheral blood leukocytes.

The protein resides in the cell membrane. Its function is as follows. Receptor for cysteinyl leukotrienes. The response is mediated via a G-protein that activates a phosphatidylinositol-calcium second messenger system. The rank order of affinities for the leukotrienes is LTC4 = LTD4 &gt;&gt; LTE4. This Mus musculus (Mouse) protein is Cysteinyl leukotriene receptor 2 (Cysltr2).